The sequence spans 125 residues: uncharacterized protein (125 aa).

The N-terminal 46 residues, 1–46, are a transit peptide targeting the chloroplast; that stretch reads MFFDTKVLNYPTIHKSISMASTMQRTSSSAASNERQLSQLQRRAPS.

It is found in the plastid. The protein localises to the chloroplast. This is an uncharacterized protein from Arabidopsis thaliana (Mouse-ear cress).